A 421-amino-acid polypeptide reads, in one-letter code: Gamma-glutamyl phosphate reductase (421 aa).

It belongs to the gamma-glutamyl phosphate reductase family.

It localises to the cytoplasm. The catalysed reaction is L-glutamate 5-semialdehyde + phosphate + NADP(+) = L-glutamyl 5-phosphate + NADPH + H(+). It participates in amino-acid biosynthesis; L-proline biosynthesis; L-glutamate 5-semialdehyde from L-glutamate: step 2/2. Its function is as follows. Catalyzes the NADPH-dependent reduction of L-glutamate 5-phosphate into L-glutamate 5-semialdehyde and phosphate. The product spontaneously undergoes cyclization to form 1-pyrroline-5-carboxylate. This is Gamma-glutamyl phosphate reductase from Roseobacter denitrificans (strain ATCC 33942 / OCh 114) (Erythrobacter sp. (strain OCh 114)).